The chain runs to 450 residues: Neuronal acetylcholine receptor subunit alpha-10 (450 aa).

An N-terminal signal peptide occupies residues 1–24 (MGLRSHHLSLGLLLLFLLPAECLG). The Extracellular segment spans residues 25-237 (AEGRLALKLF…FTLLLRRRAA (213 aa)). Residues Asn40 and Asn56 are each glycosylated (N-linked (GlcNAc...) asparagine). 2 cysteine pairs are disulfide-bonded: Cys154-Cys168 and Cys218-Cys219. Helical transmembrane passes span 238–258 (AYVC…PLAF), 268–288 (VSLG…LAES), and 302–322 (YMAT…IMNL). At 323 to 428 (HYCGPSVRPV…WKRLARVMDR (106 aa)) the chain is on the cytoplasmic side. The tract at residues 355-380 (EPCGQSRPPELSPSPQSPEGGAGPPA) is disordered. Residues 429–449 (FFLAIFFSMALVMSLLVLVQA) traverse the membrane as a helical segment.

Belongs to the ligand-gated ion channel (TC 1.A.9) family. Acetylcholine receptor (TC 1.A.9.1) subfamily. Alpha-10/CHRNA10 sub-subfamily. Forms homo- or heterooligomeric channels in conjunction with CHRNA10. The native outer hair cell receptor may be composed of CHRNA9:CHRNA10 heterooligomers. Found in the stoichiometric form (CHRNA9)2:(CHRNA10)3. In terms of tissue distribution, expressed in inner-ear tissue, tonsil, immortalized B-cells, cultured T-cells and peripheral blood lymphocytes.

It is found in the synaptic cell membrane. The protein localises to the cell membrane. It carries out the reaction Ca(2+)(in) = Ca(2+)(out). The catalysed reaction is K(+)(in) = K(+)(out). It catalyses the reaction Na(+)(in) = Na(+)(out). The enzyme catalyses Mg(2+)(in) = Mg(2+)(out). With respect to regulation, activated by a myriad of ligands such as acetylcholine. AChR activity is inhibited by the antagonists alpha-conotoxins RgIA and GeXXA, small disulfide-constrained peptides from cone snails. In terms of biological role, component of neuronal acetylcholine receptors (nAChRs) that function as pentameric, ligand-gated cation channels with high calcium permeability. nAChRs are excitatory neurotrasnmitter receptors formed by a collection of nAChR subunits. Each nAchR subunit confers differential attributes to channel properties, including activation, deactivation and desensitization kinetics, pH sensitivity, cation permeability, and binding to allosteric modulators. Forms heteropentamers with CHRNA9. Expressed in the inner ear, in sympathetic neurons and in other non-neuronal cells, such as skin keratinocytes and lymphocytes. nAChR formed by CHRNA9:CHRNA10 is involved in modulation of auditory stimuli. The channel is permeable to a range of divalent cations including calcium, the influx of which may activate a potassium current which hyperpolarizes the cell membrane. In the ear, mediates synaptic transmission between efferent olivocochlear fibers and hair cells of the cochlea, this may lead to a reduction in basilar membrane motion, altering the activity of auditory nerve fibers and reducing the range of dynamic hearing. This may protect against acoustic trauma. May also regulate keratinocyte adhesion. The protein is Neuronal acetylcholine receptor subunit alpha-10 of Homo sapiens (Human).